The chain runs to 189 residues: Peptidyl-tRNA hydrolase (189 aa).

Y15 contacts tRNA. H20 (proton acceptor) is an active-site residue. 3 residues coordinate tRNA: Y64, N66, and N112.

Belongs to the PTH family. Monomer.

The protein localises to the cytoplasm. The catalysed reaction is an N-acyl-L-alpha-aminoacyl-tRNA + H2O = an N-acyl-L-amino acid + a tRNA + H(+). Its function is as follows. Hydrolyzes ribosome-free peptidyl-tRNAs (with 1 or more amino acids incorporated), which drop off the ribosome during protein synthesis, or as a result of ribosome stalling. Functionally, catalyzes the release of premature peptidyl moieties from peptidyl-tRNA molecules trapped in stalled 50S ribosomal subunits, and thus maintains levels of free tRNAs and 50S ribosomes. This chain is Peptidyl-tRNA hydrolase, found in Sulfurihydrogenibium sp. (strain YO3AOP1).